The chain runs to 280 residues: UPF0273 protein SSO1861 (280 aa).

The region spanning 2 to 246 (KRVKTYIPGL…YLKISNWSVS (245 aa)) is the KaiC domain. Residue 29–36 (GGPGTGKS) participates in ATP binding.

The protein belongs to the UPF0273 family.

The protein is UPF0273 protein SSO1861 of Saccharolobus solfataricus (strain ATCC 35092 / DSM 1617 / JCM 11322 / P2) (Sulfolobus solfataricus).